A 325-amino-acid polypeptide reads, in one-letter code: Ferrochelatase (325 aa).

Residues histidine 172 and glutamate 267 each contribute to the Fe cation site.

The protein belongs to the ferrochelatase family.

It is found in the cytoplasm. The catalysed reaction is heme b + 2 H(+) = protoporphyrin IX + Fe(2+). It participates in porphyrin-containing compound metabolism; protoheme biosynthesis; protoheme from protoporphyrin-IX: step 1/1. In terms of biological role, catalyzes the ferrous insertion into protoporphyrin IX. The chain is Ferrochelatase from Acidobacterium capsulatum (strain ATCC 51196 / DSM 11244 / BCRC 80197 / JCM 7670 / NBRC 15755 / NCIMB 13165 / 161).